Consider the following 171-residue polypeptide: MPQQNSYSKEDLVKAGTGELFGEGNSQLPSDNMLMMDRIITISEEGGENGKGFILAELDITPDLWFFDCHFKGDPVMPGCLGLDAMWQLVGFFLAWTGGPGKGRALGVGEVKFTGQILPTAKKVTFKIDFKRVIKRKLYMGLADGSVSVDGREIYTAKDLKVGLFTDTSKF.

The active site involves histidine 70.

It belongs to the thioester dehydratase family. FabA subfamily. As to quaternary structure, homodimer.

It localises to the cytoplasm. It carries out the reaction a (3R)-hydroxyacyl-[ACP] = a (2E)-enoyl-[ACP] + H2O. The enzyme catalyses (3R)-hydroxydecanoyl-[ACP] = (2E)-decenoyl-[ACP] + H2O. The catalysed reaction is (2E)-decenoyl-[ACP] = (3Z)-decenoyl-[ACP]. It functions in the pathway lipid metabolism; fatty acid biosynthesis. In terms of biological role, necessary for the introduction of cis unsaturation into fatty acids. Catalyzes the dehydration of (3R)-3-hydroxydecanoyl-ACP to E-(2)-decenoyl-ACP and then its isomerization to Z-(3)-decenoyl-ACP. Can catalyze the dehydratase reaction for beta-hydroxyacyl-ACPs with saturated chain lengths up to 16:0, being most active on intermediate chain length. The sequence is that of 3-hydroxydecanoyl-[acyl-carrier-protein] dehydratase from Colwellia psychrerythraea (strain 34H / ATCC BAA-681) (Vibrio psychroerythus).